Here is a 561-residue protein sequence, read N- to C-terminus: Urocanate hydratase (561 aa).

Residues Gly-52–Gly-53, Gln-130, Gly-176–Gly-178, Glu-196, Arg-201, Asn-242–Ala-243, Gln-263–His-267, Tyr-273–Leu-274, and Tyr-322 contribute to the NAD(+) site. Cys-410 is an active-site residue. Position 492 (Gly-492) interacts with NAD(+).

Belongs to the urocanase family. It depends on NAD(+) as a cofactor.

Its subcellular location is the cytoplasm. The enzyme catalyses 4-imidazolone-5-propanoate = trans-urocanate + H2O. The protein operates within amino-acid degradation; L-histidine degradation into L-glutamate; N-formimidoyl-L-glutamate from L-histidine: step 2/3. Functionally, catalyzes the conversion of urocanate to 4-imidazolone-5-propionate. The chain is Urocanate hydratase from Salmonella choleraesuis (strain SC-B67).